The chain runs to 275 residues: Exosome complex component RRP40 (275 aa).

Ala2 is modified (N-acetylalanine). Residue Lys151 forms a Glycyl lysine isopeptide (Lys-Gly) (interchain with G-Cter in SUMO2) linkage.

This sequence belongs to the RRP40 family. In terms of assembly, component of the RNA exosome core complex (Exo-9), composed of EXOSC1, EXOSC2, EXOSC3, EXOSC4, EXOSC5, EXOSC6, EXOSC7, EXOSC8 and EXOSC9; within the complex interacts with EXOSC5 and EXOSC9. The catalytically inactive RNA exosome core complex (Exo-9) associates with the catalytic subunit EXOSC10/RRP6. Exo-9 may associate with DIS3 to form the nucleolar exosome complex, or DIS3L to form the cytoplasmic exosome complex. Exo-9 is formed by a hexameric base ring consisting of the heterodimers EXOSC4-EXOSC9, EXOSC5-EXOSC8 and EXOSC6-EXOSC7, and a cap ring consisting of EXOSC1, EXOSC2 and EXOSC3. The RNA exosome complex associates with cofactors C1D/RRP47, MPHOSPH6/MPP6 and MTREX/MTR4. Interacts with MPHOSPH6/MPP6; the interaction is direct. Interacts with GTPBP1. Interacts with ZC3HAV1. Interacts with DDX17 only in the presence of ZC3HAV1 in an RNA-independent manner. Interacts with DHX36; this interaction occurs in a RNase-insensitive manner. Interacts with HBS1L isoform 2.

It localises to the cytoplasm. It is found in the nucleus. The protein resides in the nucleolus. Its function is as follows. Non-catalytic component of the RNA exosome complex which has 3'-&gt;5' exoribonuclease activity and participates in a multitude of cellular RNA processing and degradation events. In the nucleus, the RNA exosome complex is involved in proper maturation of stable RNA species such as rRNA, snRNA and snoRNA, in the elimination of RNA processing by-products and non-coding 'pervasive' transcripts, such as antisense RNA species and promoter-upstream transcripts (PROMPTs), and of mRNAs with processing defects, thereby limiting or excluding their export to the cytoplasm. The RNA exosome may be involved in Ig class switch recombination (CSR) and/or Ig variable region somatic hypermutation (SHM) by targeting AICDA deamination activity to transcribed dsDNA substrates. In the cytoplasm, the RNA exosome complex is involved in general mRNA turnover and specifically degrades inherently unstable mRNAs containing AU-rich elements (AREs) within their 3' untranslated regions, and in RNA surveillance pathways, preventing translation of aberrant mRNAs. It seems to be involved in degradation of histone mRNA. The catalytic inactive RNA exosome core complex of 9 subunits (Exo-9) is proposed to play a pivotal role in the binding and presentation of RNA for ribonucleolysis, and to serve as a scaffold for the association with catalytic subunits and accessory proteins or complexes. EXOSC3 as peripheral part of the Exo-9 complex stabilizes the hexameric ring of RNase PH-domain subunits through contacts with EXOSC9 and EXOSC5. This chain is Exosome complex component RRP40 (EXOSC3), found in Bos taurus (Bovine).